The primary structure comprises 137 residues: Basic phospholipase A2 DsM-S1 (137 aa).

Positions 1 to 16 (MRTLWIVAVCLIGVEG) are cleaved as a signal peptide. Intrachain disulfides connect Cys-42/Cys-131, Cys-44/Cys-60, Cys-59/Cys-111, Cys-65/Cys-137, Cys-66/Cys-104, Cys-73/Cys-97, and Cys-91/Cys-102. Ca(2+) is bound by residues Tyr-43, Gly-45, and Gly-47. His-63 is an active-site residue. Asp-64 provides a ligand contact to Ca(2+). Asp-105 is a catalytic residue.

Belongs to the phospholipase A2 family. Group II subfamily. D49 sub-subfamily. Ca(2+) is required as a cofactor. In terms of tissue distribution, expressed by the venom gland.

The protein resides in the secreted. The catalysed reaction is a 1,2-diacyl-sn-glycero-3-phosphocholine + H2O = a 1-acyl-sn-glycero-3-phosphocholine + a fatty acid + H(+). In terms of biological role, snake venom phospholipase A2 (PLA2) that is neurotoxic. PLA2 catalyzes the calcium-dependent hydrolysis of the 2-acyl groups in 3-sn-phosphoglycerides. This Daboia siamensis (Eastern Russel's viper) protein is Basic phospholipase A2 DsM-S1.